Consider the following 1046-residue polypeptide: Hemoglobin-haptoglobin-binding protein A (1046 aa).

Positions 1–24 are cleaved as a signal peptide; it reads MTNFRLNLLAYSVMLGLTAGVAYA. Repeat copies occupy residues 26 to 29, 30 to 33, 34 to 37, and 38 to 41. Positions 26 to 41 are 4 X 4 AA tandem repeats of Q-P-T-N; sequence QPTNQPTNQPTNQPTN. Positions 51–58 match the TonB box motif; sequence EQINVLGS. Residues 61 to 188 enclose the TBDR plug domain; the sequence is HNDNTPPKIA…LGGSVSFDTK (128 aa). The 851-residue stretch at 196 to 1046 folds into the TBDR beta-barrel domain; that stretch reads NKNYYASYKR…NYRMSVQFEF (851 aa). A TonB C-terminal box motif is present at residues 1029–1046; the sequence is NRFYAPGRNYRMSVQFEF.

The protein belongs to the TonB-dependent receptor family. Hemoglobin/haptoglobin binding protein subfamily.

It is found in the cell outer membrane. Functionally, acts as a receptor for the hemoglobin/haptoglobin complex of the human host and is required for heme uptake. Does not bind hemoglobin alone. This chain is Hemoglobin-haptoglobin-binding protein A (hhuA), found in Haemophilus influenzae.